Reading from the N-terminus, the 745-residue chain is Copper-transporting ATPase (745 aa).

An HMA domain is found at 1–67 (MKESFYIEGM…LIEKLGYSPK (67 aa)). At 1-83 (MKESFYIEGM…KKEFFSPNVK (83 aa)) the chain is on the cytoplasmic side. Cu cation contacts are provided by Cys-12 and Cys-15. Residues 84–104 (LALAVIFTLFVVYLSMGAMLS) form a helical membrane-spanning segment. At 105 to 124 (PSLLPESLLTINHHSNFLNA) the chain is on the extracellular side. The chain crosses the membrane as a helical span at residues 125 to 144 (CLQLIGALIVMHLGRDFYIQ). At 145 to 151 (GFKALWH) the chain is on the cytoplasmic side. Residues 152-172 (RQPNMSSLIAIGTSAALISSL) form a helical membrane-spanning segment. At 173–194 (WQLYLVYTNHYTDQWSYGHYYF) the chain is on the extracellular side. A helical transmembrane segment spans residues 195 to 215 (ESVCVILMFVMVGKRIENVSK). The Cytoplasmic segment spans residues 216–343 (DKALDAMQAL…KAEISRLADK (128 aa)). A helical membrane pass occupies residues 344 to 366 (VSSVFVPSVIAIAVLAFVVWLII). Residues 367 to 379 (APKPDFWWNFRTA) are Extracellular-facing. Residues 380–397 (LEVFVSVLVISCPCALGL) form a helical membrane-spanning segment. At 398-685 (ATPMSILVAN…KLSQATIKNI (288 aa)) the chain is on the cytoplasmic side. Catalysis depends on Asp-435, which acts as the 4-aspartylphosphate intermediate. Mg(2+) is bound by residues Asp-631 and Asp-635. Residues 686-705 (KENLFWAFCYNSVFIPLACG) form a helical membrane-spanning segment. Over 706–716 (VLYKANIMLSP) the chain is Extracellular. The chain crosses the membrane as a helical span at residues 717 to 735 (AIAGLAMSLSSVSVVLNSQ). Over 736 to 745 (RLRNFKIKDH) the chain is Cytoplasmic.

The protein belongs to the cation transport ATPase (P-type) (TC 3.A.3) family. Type IB subfamily.

Its subcellular location is the cell membrane. The enzyme catalyses Cu(2+)(in) + ATP + H2O = Cu(2+)(out) + ADP + phosphate + H(+). In terms of biological role, probably involved in copper export. In Helicobacter pylori (strain J99 / ATCC 700824) (Campylobacter pylori J99), this protein is Copper-transporting ATPase (copA).